The primary structure comprises 369 residues: Aminomethyltransferase (369 aa).

Belongs to the GcvT family. As to quaternary structure, the glycine cleavage system is composed of four proteins: P, T, L and H.

The catalysed reaction is N(6)-[(R)-S(8)-aminomethyldihydrolipoyl]-L-lysyl-[protein] + (6S)-5,6,7,8-tetrahydrofolate = N(6)-[(R)-dihydrolipoyl]-L-lysyl-[protein] + (6R)-5,10-methylene-5,6,7,8-tetrahydrofolate + NH4(+). Its function is as follows. The glycine cleavage system catalyzes the degradation of glycine. In Synechococcus sp. (strain CC9311), this protein is Aminomethyltransferase.